The primary structure comprises 128 residues: Aspartate 1-decarboxylase (128 aa).

Ser-25 functions as the Schiff-base intermediate with substrate; via pyruvic acid in the catalytic mechanism. Ser-25 carries the post-translational modification Pyruvic acid (Ser). Substrate is bound at residue Thr-57. Tyr-58 (proton donor) is an active-site residue. 73–75 (GAA) provides a ligand contact to substrate.

This sequence belongs to the PanD family. As to quaternary structure, heterooctamer of four alpha and four beta subunits. It depends on pyruvate as a cofactor. In terms of processing, is synthesized initially as an inactive proenzyme, which is activated by self-cleavage at a specific serine bond to produce a beta-subunit with a hydroxyl group at its C-terminus and an alpha-subunit with a pyruvoyl group at its N-terminus.

Its subcellular location is the cytoplasm. It catalyses the reaction L-aspartate + H(+) = beta-alanine + CO2. Its pathway is cofactor biosynthesis; (R)-pantothenate biosynthesis; beta-alanine from L-aspartate: step 1/1. Its function is as follows. Catalyzes the pyruvoyl-dependent decarboxylation of aspartate to produce beta-alanine. This Caldicellulosiruptor bescii (strain ATCC BAA-1888 / DSM 6725 / KCTC 15123 / Z-1320) (Anaerocellum thermophilum) protein is Aspartate 1-decarboxylase.